The chain runs to 82 residues: KappaPI-actitoxin-Avd3e (82 aa).

The N-terminal stretch at 1–16 (MVFLLCFFLVADVSYG) is a signal peptide. A BPTI/Kunitz inhibitor domain is found at 21–71 (CELPKVVGPCRARFPRYYYNSSSKRCEKFIYGGCGGNANNFHTLEECEKVC). 3 cysteine pairs are disulfide-bonded: C21/C71, C30/C54, and C46/C67. Positions 76-82 (RDSPKEN) are excised as a propeptide.

The protein belongs to the venom Kunitz-type family. Sea anemone type 2 potassium channel toxin subfamily.

It localises to the secreted. It is found in the nematocyst. In terms of biological role, serine protease inhibitor that inhibits both tissue and plasma kallikreins. Has hemolytic activity. Inhibits voltage-gated potassium channels (Kv). The chain is KappaPI-actitoxin-Avd3e from Anemonia viridis (Snakelocks anemone).